Consider the following 245-residue polypeptide: Orotidine 5'-phosphate decarboxylase (245 aa).

Substrate is bound by residues aspartate 22, lysine 44, 71 to 80 (DLKFHDIPNT), threonine 131, arginine 192, glutamine 201, glycine 221, and arginine 222. The active-site Proton donor is the lysine 73.

Belongs to the OMP decarboxylase family. Type 1 subfamily. As to quaternary structure, homodimer.

The catalysed reaction is orotidine 5'-phosphate + H(+) = UMP + CO2. Its pathway is pyrimidine metabolism; UMP biosynthesis via de novo pathway; UMP from orotate: step 2/2. In terms of biological role, catalyzes the decarboxylation of orotidine 5'-monophosphate (OMP) to uridine 5'-monophosphate (UMP). In Escherichia coli O139:H28 (strain E24377A / ETEC), this protein is Orotidine 5'-phosphate decarboxylase.